The primary structure comprises 551 residues: ATP synthase subunit alpha, mitochondrial (551 aa).

210–217 contacts ATP; that stretch reads GDRQTGKT.

The protein belongs to the ATPase alpha/beta chains family. In terms of assembly, F-type ATPases have 2 components, CF(1) - the catalytic core - and CF(0) - the membrane proton channel. CF(1) has five subunits: alpha(3), beta(3), gamma(1), delta(1), epsilon(1). CF(0) has three main subunits: a, b and c.

Its subcellular location is the mitochondrion. It is found in the mitochondrion inner membrane. Functionally, mitochondrial membrane ATP synthase (F(1)F(0) ATP synthase or Complex V) produces ATP from ADP in the presence of a proton gradient across the membrane which is generated by electron transport complexes of the respiratory chain. F-type ATPases consist of two structural domains, F(1) - containing the extramembraneous catalytic core, and F(0) - containing the membrane proton channel, linked together by a central stalk and a peripheral stalk. During catalysis, ATP synthesis in the catalytic domain of F(1) is coupled via a rotary mechanism of the central stalk subunits to proton translocation. Subunits alpha and beta form the catalytic core in F(1). Rotation of the central stalk against the surrounding alpha(3)beta(3) subunits leads to hydrolysis of ATP in three separate catalytic sites on the beta subunits. Subunit alpha does not bear the catalytic high-affinity ATP-binding sites. This chain is ATP synthase subunit alpha, mitochondrial (atp-1), found in Neurospora crassa (strain ATCC 24698 / 74-OR23-1A / CBS 708.71 / DSM 1257 / FGSC 987).